A 147-amino-acid chain; its full sequence is MMKLNLFINANETESYIDIHAPKMNDHVQSIINAVNDLDKSHTLVGYIDKEIHIIHISDVITFQVINKNVTAITRNQKFKLKLRLYELEKQLPQHFIRISKSEIVNKYCIEKLLLEPNGLIRMYLKDAHYTYSSRRYLKSIKERLSI.

One can recognise an HTH LytTR-type domain in the interval 44–147 (LVGYIDKEIH…LKSIKERLSI (104 aa)).

It is found in the cytoplasm. This is an uncharacterized protein from Staphylococcus aureus (strain bovine RF122 / ET3-1).